The sequence spans 187 residues: Mitochondrial intermembrane space import and assembly protein 40 (187 aa).

A mitochondrion-targeting transit peptide spans 1 to 24 (MFRPASRALLRAPAVARGPASRRL). Topologically, residues 25–43 (ISTAPAESKPRSWKNTAVR) are mitochondrial matrix. The chain crosses the membrane as a helical; Signal-anchor for type II membrane protein span at residues 44 to 61 (LGLAAGAIYYYNTSNVFA). Residues 62–187 (ENPSFSLNNQ…MDCIEKFKCV (126 aa)) lie on the Mitochondrial intermembrane side of the membrane. Residues 73–115 (KKNSAEEPLPTLDSIKPRIREERESAAPKPNAEQAPAQELPFG) are disordered. Residues 87 to 98 (IKPRIREERESA) are compositionally biased toward basic and acidic residues. Disulfide bonds link Cys-146-Cys-148 and Cys-167-Cys-180. The 34-residue stretch at 154–187 (HGPCGEEFKAAFSCFVYSEEEPKGMDCIEKFKCV) folds into the CHCH domain. The short motif at 157–167 (CGEEFKAAFSC) is the Cx9C motif element.

As to quaternary structure, monomer. Requires Cu(2+) as cofactor. Zn(2+) is required as a cofactor.

The protein localises to the mitochondrion inner membrane. Functionally, required for the import and folding of small cysteine-containing proteins (small Tim) in the mitochondrial intermembrane space (IMS). Forms a redox cycle with ERV1 that involves a disulfide relay system. Precursor proteins to be imported into the IMS are translocated in their reduced form into the mitochondria. The oxidized form of MIA40 forms a transient intermolecular disulfide bridge with the reduced precursor protein, resulting in oxidation of the precursor protein that now contains an intramolecular disulfide bond and is able to undergo folding in the IMS. This chain is Mitochondrial intermembrane space import and assembly protein 40 (mia40), found in Aspergillus oryzae (strain ATCC 42149 / RIB 40) (Yellow koji mold).